We begin with the raw amino-acid sequence, 97 residues long: UPF0235 protein AZOSEA09540 (97 aa).

Belongs to the UPF0235 family.

This Aromatoleum aromaticum (strain DSM 19018 / LMG 30748 / EbN1) (Azoarcus sp. (strain EbN1)) protein is UPF0235 protein AZOSEA09540.